A 315-amino-acid chain; its full sequence is GTP cyclohydrolase MptA 1 (315 aa).

Belongs to the GTP cyclohydrolase IV family. As to quaternary structure, homodimer. It depends on Fe(2+) as a cofactor.

It catalyses the reaction GTP + H2O = 7,8-dihydroneopterin 2',3'-cyclic phosphate + formate + diphosphate + H(+). It participates in cofactor biosynthesis; 5,6,7,8-tetrahydromethanopterin biosynthesis. Functionally, converts GTP to 7,8-dihydro-D-neopterin 2',3'-cyclic phosphate, the first intermediate in the biosynthesis of coenzyme methanopterin. This Methanocella arvoryzae (strain DSM 22066 / NBRC 105507 / MRE50) protein is GTP cyclohydrolase MptA 1.